Consider the following 491-residue polypeptide: La-related protein 6 (491 aa).

Residues 1-87 (MAQSGGEARP…REDLEQEWKP (87 aa)) form a disordered region. Ala-2 bears the N-acetylalanine mark. Positions 24–37 (EAEDVDELEDEEEG) are enriched in acidic residues. Residues Ser-56 and Ser-58 each carry the phosphoserine modification. The 92-residue stretch at 86-177 (KPPDEELIKK…RRTTPVPLFP (92 aa)) folds into the HTH La-type RNA-binding domain. The RRM domain maps to 184 to 296 (KMLLVYDLYL…KAVLIGMKPP (113 aa)). The short motif at 186 to 193 (LLVYDLYL) is the Nuclear export signal element. Disordered regions lie at residues 293 to 403 (MKPP…EEGR) and 423 to 491 (SSVT…RACV). The short motif at 296–302 (PKKKPAK) is the Nuclear localization signal element. The span at 332 to 346 (DESSANSSSDPESNP) shows a compositional bias: low complexity. 2 stretches are compositionally biased toward polar residues: residues 359-386 (NKLSPSGHQNLFLSPNASPCTSPWSSPL) and 444-453 (QEKSPGTSPL). Residues 427–485 (PSGSPWVRRRRQAEMGTQEKSPGTSPLLSRKMQTADGLPVGVLRLPRGPDNTRGFHGHE) form the SUZ-C domain. The span at 482 to 491 (HGHERSRACV) shows a compositional bias: basic and acidic residues.

In terms of assembly, interacts (via the HTH domain) with VIM/vimentin. Interacts (via C-terminus) with non-muscle myosin MYH10. Interacts (via C-terminus) with DHX9. As to expression, expressed in numerous tissues.

Its subcellular location is the cytoplasm. It localises to the nucleus. In terms of biological role, regulates the coordinated translation of type I collagen alpha-1 and alpha-2 mRNAs, CO1A1 and CO1A2. Stabilizes mRNAs through high-affinity binding of a stem-loop structure in their 5' UTR. This regulation requires VIM and MYH10 filaments, and the helicase DHX9. This chain is La-related protein 6 (LARP6), found in Homo sapiens (Human).